The chain runs to 489 residues: MNELRKLSITQMHDGLKKKSFSAVELVEAHISAVENEKLNAFITKTPEIAMKAAKAADEHFSRQKDDLISPLMGVPVGIKDLFCTKGIKTTACSKMLENFVPTYESTVSDLLLKSGAAMLGKLNMDEFAMGSANTNSYFGPVENVWIRKSDGEKVVPGGSSGGSAASVAGFLCAGALGSDTGGSVRQPAAYCGVVGIKPTYGRCSRFGMIAFASSLDQAGVITRSVSDSALMLEAICGYDTKDSISSEKPVPKFSSFINGDVKGKRIGIPKEYRMDGISEEIVHNWEKVASYLKENGAEVVDVTLPHTKYAIPVYYLICSAETSSNLARYDGVRYGFRVDADTLEEMYSLTRAEGFGKEVKRRILIGAYALSSGHYNEYYEKAQCIRALIRNDFIKAFEKIDYILVPSAPTEAFGLNEKPDPLIMCINDVFTVPASLAGLPAISVPVGLSNEGLPLALQVIGNYYDEAGILNVASVIEQNCGRIIRPLA.

Active-site charge relay system residues include Lys-80 and Ser-160. Ser-184 functions as the Acyl-ester intermediate in the catalytic mechanism.

Belongs to the amidase family. GatA subfamily. In terms of assembly, heterotrimer of A, B and C subunits.

The catalysed reaction is L-glutamyl-tRNA(Gln) + L-glutamine + ATP + H2O = L-glutaminyl-tRNA(Gln) + L-glutamate + ADP + phosphate + H(+). Allows the formation of correctly charged Gln-tRNA(Gln) through the transamidation of misacylated Glu-tRNA(Gln) in organisms which lack glutaminyl-tRNA synthetase. The reaction takes place in the presence of glutamine and ATP through an activated gamma-phospho-Glu-tRNA(Gln). This is Glutamyl-tRNA(Gln) amidotransferase subunit A from Wolbachia pipientis wMel.